The chain runs to 841 residues: DNA mismatch repair protein MutS (841 aa).

600-607 (GPNMAGKS) provides a ligand contact to ATP.

The protein belongs to the DNA mismatch repair MutS family.

Its function is as follows. This protein is involved in the repair of mismatches in DNA. It is possible that it carries out the mismatch recognition step. This protein has a weak ATPase activity. This chain is DNA mismatch repair protein MutS, found in Carboxydothermus hydrogenoformans (strain ATCC BAA-161 / DSM 6008 / Z-2901).